The chain runs to 178 residues: FANCD2 opposite strand protein (178 aa).

The polypeptide is FANCD2 opposite strand protein (Fancd2os) (Mus musculus (Mouse)).